Reading from the N-terminus, the 521-residue chain is Bifunctional purine biosynthesis protein PurH (521 aa).

One can recognise an MGS-like domain in the interval 1 to 145 (MIKQALISVS…KNHRDVTVVV (145 aa)).

It belongs to the PurH family.

The catalysed reaction is (6R)-10-formyltetrahydrofolate + 5-amino-1-(5-phospho-beta-D-ribosyl)imidazole-4-carboxamide = 5-formamido-1-(5-phospho-D-ribosyl)imidazole-4-carboxamide + (6S)-5,6,7,8-tetrahydrofolate. It carries out the reaction IMP + H2O = 5-formamido-1-(5-phospho-D-ribosyl)imidazole-4-carboxamide. It participates in purine metabolism; IMP biosynthesis via de novo pathway; 5-formamido-1-(5-phospho-D-ribosyl)imidazole-4-carboxamide from 5-amino-1-(5-phospho-D-ribosyl)imidazole-4-carboxamide (10-formyl THF route): step 1/1. The protein operates within purine metabolism; IMP biosynthesis via de novo pathway; IMP from 5-formamido-1-(5-phospho-D-ribosyl)imidazole-4-carboxamide: step 1/1. This Burkholderia thailandensis (strain ATCC 700388 / DSM 13276 / CCUG 48851 / CIP 106301 / E264) protein is Bifunctional purine biosynthesis protein PurH.